The chain runs to 292 residues: Nucleotide-binding protein Ldb0621 (292 aa).

14–21 (GMSGAGKT) contributes to the ATP binding site. Residue 64 to 67 (DLRV) participates in GTP binding.

This sequence belongs to the RapZ-like family.

Displays ATPase and GTPase activities. In Lactobacillus delbrueckii subsp. bulgaricus (strain ATCC 11842 / DSM 20081 / BCRC 10696 / JCM 1002 / NBRC 13953 / NCIMB 11778 / NCTC 12712 / WDCM 00102 / Lb 14), this protein is Nucleotide-binding protein Ldb0621.